The sequence spans 313 residues: Leucine zipper protein 4 (313 aa).

The segment at 1-119 is interaction with DDX39B/UAP56; it reads MASFRKLTLS…PLIEQEKCSD (119 aa). 2 disordered regions span residues 1–238 and 290–313; these read MASF…QGDL and QSGR…TITT. The UAP56-binding motif (UBM); required for proper nuclear localization signature appears at 22–40; it reads KVNFLDMSLDDIIIYKELE. Positions 34 to 60 are enriched in basic and acidic residues; the sequence is IIYKELEGTNAEEEKNKRQNHSKKESP. The arg-rich; required for RNA-binding stretch occupies residues 51–80; sequence RQNHSKKESPSRQQSKAHRHRHRRGYSRCR. Over residues 65 to 77 the composition is skewed to basic residues; sequence SKAHRHRHRRGYS. A compositionally biased stretch (basic and acidic residues) spans 81-92; it reads SNSEEGNHDKKP. Residues 126-141 show a composition bias toward polar residues; that stretch reads EKNQGQSEGNQHQSEG. Residues 142–168 show a composition bias toward basic and acidic residues; sequence NPDKSEESQGQPEENHHSERSRNHLER. Residues 169 to 179 show a composition bias toward polar residues; the sequence is SLSQSDRSQGQ. The RS-containing His-rich (RS-H); necessary for nuclear localization stretch occupies residues 178–236; that stretch reads GQLKRHHPQYERSHGQYKRSHGQSERSHGHSERSHGHSERSHGHSERSHGHSKRSRSQG. Basic and acidic residues predominate over residues 199–226; sequence GQSERSHGHSERSHGHSERSHGHSERSH. Position 234 is a phosphoserine (S234). Residues 238 to 287 are leucine-zipper; required for RNA-binding and for its relocalization to the cytoplasm during cell division; it reads LVDTQSDLIATQRDLIATQKDLIATQRDLIATQRDLIVTQRDLVATERDL. Residues 241-313 form an interaction with NXF1 region; it reads TQSDLIATQR…YSTGKNTITT (73 aa). The span at 304–313 shows a compositional bias: polar residues; it reads YSTGKNTITT.

Interacts with NXF1, NXF2, THOC1, THOC5, DDX39B/UAP56 and SRRT. In terms of tissue distribution, expressed specifically in testis. Also expressed in a wide variety of cancer types, but particularly high levels of expression observed in melanoma cells.

It is found in the nucleus. The protein resides in the cytoplasm. In terms of biological role, export adapter involved in mRNA nuclear export in cancer cells. Binds and enhances the RNA-binding activity of the nuclear RNA export factor NXF1. Can restore mRNA export function in cells compromised by loss of mRNA export adapters. The polypeptide is Leucine zipper protein 4 (LUZP4) (Homo sapiens (Human)).